The primary structure comprises 640 residues: Threonine--tRNA ligase (640 aa).

Residues 1–61 (MLVVTLPDGS…DKDSQLAIIT (61 aa)) enclose the TGS domain. Residues 242–533 (DHRRLGKQLD…LIENHTGNMP (292 aa)) form a catalytic region. 3 residues coordinate Zn(2+): Cys-333, His-384, and His-510.

The protein belongs to the class-II aminoacyl-tRNA synthetase family. Homodimer. Zn(2+) is required as a cofactor.

It is found in the cytoplasm. It carries out the reaction tRNA(Thr) + L-threonine + ATP = L-threonyl-tRNA(Thr) + AMP + diphosphate + H(+). Functionally, catalyzes the attachment of threonine to tRNA(Thr) in a two-step reaction: L-threonine is first activated by ATP to form Thr-AMP and then transferred to the acceptor end of tRNA(Thr). Also edits incorrectly charged L-seryl-tRNA(Thr). The protein is Threonine--tRNA ligase of Polynucleobacter necessarius subsp. necessarius (strain STIR1).